The sequence spans 437 residues: 3-phosphoshikimate 1-carboxyvinyltransferase (437 aa).

3 residues coordinate 3-phosphoshikimate: Lys21, Ser22, and Arg26. Lys21 serves as a coordination point for phosphoenolpyruvate. The phosphoenolpyruvate site is built by Gly101 and Arg129. Residues Ser172, Ser173, Gln174, Ser200, Asp314, and Lys341 each contribute to the 3-phosphoshikimate site. Position 174 (Gln174) interacts with phosphoenolpyruvate. Asp314 acts as the Proton acceptor in catalysis. Residues Arg345, Arg388, and Lys414 each contribute to the phosphoenolpyruvate site.

It belongs to the EPSP synthase family. As to quaternary structure, monomer.

The protein localises to the cytoplasm. The catalysed reaction is 3-phosphoshikimate + phosphoenolpyruvate = 5-O-(1-carboxyvinyl)-3-phosphoshikimate + phosphate. Its pathway is metabolic intermediate biosynthesis; chorismate biosynthesis; chorismate from D-erythrose 4-phosphate and phosphoenolpyruvate: step 6/7. In terms of biological role, catalyzes the transfer of the enolpyruvyl moiety of phosphoenolpyruvate (PEP) to the 5-hydroxyl of shikimate-3-phosphate (S3P) to produce enolpyruvyl shikimate-3-phosphate and inorganic phosphate. This is 3-phosphoshikimate 1-carboxyvinyltransferase from Clostridioides difficile (strain 630) (Peptoclostridium difficile).